A 224-amino-acid polypeptide reads, in one-letter code: Cytochrome c oxidase subunit 2 (224 aa).

Over 1–26 (MSTWGQINLMDPASPIQMEMMLFHDH) the chain is Mitochondrial intermembrane. A helical membrane pass occupies residues 27–48 (AMAILIGIFTLVSLLGVKLCFN). The Mitochondrial matrix segment spans residues 49 to 62 (TLSTRTMHEAQLLE). The chain crosses the membrane as a helical span at residues 63–82 (TLWTILPAFLLVWLALPSLR). Residues 83–224 (LLYLLDEQGS…DVKDFIKMCN (142 aa)) are Mitochondrial intermembrane-facing. Residues His161, Cys196, Glu198, Cys200, His204, and Met207 each contribute to the Cu cation site. A Mg(2+)-binding site is contributed by Glu198.

This sequence belongs to the cytochrome c oxidase subunit 2 family. As to quaternary structure, component of the cytochrome c oxidase (complex IV, CIV), a multisubunit enzyme composed of a catalytic core of 3 subunits and several supernumerary subunits. The complex exists as a monomer or a dimer and forms supercomplexes (SCs) in the inner mitochondrial membrane with ubiquinol-cytochrome c oxidoreductase (cytochrome b-c1 complex, complex III, CIII). The cofactor is Cu cation.

It localises to the mitochondrion inner membrane. The catalysed reaction is 4 Fe(II)-[cytochrome c] + O2 + 8 H(+)(in) = 4 Fe(III)-[cytochrome c] + 2 H2O + 4 H(+)(out). Functionally, component of the cytochrome c oxidase, the last enzyme in the mitochondrial electron transport chain which drives oxidative phosphorylation. The respiratory chain contains 3 multisubunit complexes succinate dehydrogenase (complex II, CII), ubiquinol-cytochrome c oxidoreductase (cytochrome b-c1 complex, complex III, CIII) and cytochrome c oxidase (complex IV, CIV), that cooperate to transfer electrons derived from NADH and succinate to molecular oxygen, creating an electrochemical gradient over the inner membrane that drives transmembrane transport and the ATP synthase. Cytochrome c oxidase is the component of the respiratory chain that catalyzes the reduction of oxygen to water. Electrons originating from reduced cytochrome c in the intermembrane space (IMS) are transferred via the dinuclear copper A center (CU(A)) of subunit 2 and heme A of subunit 1 to the active site in subunit 1, a binuclear center (BNC) formed by heme A3 and copper B (CU(B)). The BNC reduces molecular oxygen to 2 water molecules using 4 electrons from cytochrome c in the IMS and 4 protons from the mitochondrial matrix. In Albinaria caerulea (Land snail), this protein is Cytochrome c oxidase subunit 2 (COII).